Here is a 1171-residue protein sequence, read N- to C-terminus: Phytochrome B (1171 aa).

Residues Met1–Ala19 are compositionally biased toward low complexity. The interval Met1–Ala53 is disordered. Residues Ala38 to Ala52 show a composition bias toward gly residues. A GAF domain is found at Asp259 to Leu442. A phytochromobilin-binding site is contributed by Cys364. PAS domains follow at residues Val661–Asp732 and Asp795–Leu866. The 219-residue stretch at Tyr943–Gln1161 folds into the Histidine kinase domain.

Belongs to the phytochrome family. Homodimer. In terms of processing, contains one covalently linked phytochromobilin chromophore.

Functionally, regulatory photoreceptor which exists in two forms that are reversibly interconvertible by light: the Pr form that absorbs maximally in the red region of the spectrum and the Pfr form that absorbs maximally in the far-red region. Photoconversion of Pr to Pfr induces an array of morphogenic responses, whereas reconversion of Pfr to Pr cancels the induction of those responses. Pfr controls the expression of a number of nuclear genes including those encoding the small subunit of ribulose-bisphosphate carboxylase, chlorophyll A/B binding protein, protochlorophyllide reductase, rRNA, etc. It also controls the expression of its own gene(s) in a negative feedback fashion. In Oryza sativa subsp. japonica (Rice), this protein is Phytochrome B (PHYB).